We begin with the raw amino-acid sequence, 170 residues long: Dual-action ribosomal maturation protein DarP (170 aa).

The protein belongs to the DarP family.

The protein resides in the cytoplasm. Member of a network of 50S ribosomal subunit biogenesis factors which assembles along the 30S-50S interface, preventing incorrect 23S rRNA structures from forming. Promotes peptidyl transferase center (PTC) maturation. This is Dual-action ribosomal maturation protein DarP from Neisseria meningitidis serogroup A / serotype 4A (strain DSM 15465 / Z2491).